Consider the following 293-residue polypeptide: Elongation factor Ts (293 aa).

The involved in Mg(2+) ion dislocation from EF-Tu stretch occupies residues 80 to 83; the sequence is TDFV.

Belongs to the EF-Ts family.

It is found in the cytoplasm. Functionally, associates with the EF-Tu.GDP complex and induces the exchange of GDP to GTP. It remains bound to the aminoacyl-tRNA.EF-Tu.GTP complex up to the GTP hydrolysis stage on the ribosome. The chain is Elongation factor Ts from Aeromonas salmonicida (strain A449).